Consider the following 1603-residue polypeptide: GATOR1 complex protein DEPDC5 (1603 aa).

Disordered stretches follow at residues 427-450, 484-527, and 696-720; these read GKKP…KESE, VRER…SSLG, and LSNS…VSTS. The span at 430–439 shows a compositional bias: basic and acidic residues; sequence PASEKAKNGR. Residues 494–508 show a composition bias toward low complexity; that stretch reads SASSCDVSSSPSLPS. Ser505 is modified (phosphoserine). 2 stretches are compositionally biased toward polar residues: residues 518–527 and 696–707; these read SQASDDSSLG and LSNSGAGMNPRT. Ser1002 carries the post-translational modification Phosphoserine; by PIM1. The segment covering 1135–1153 has biased composition (polar residues); the sequence is DRGNSQTFGNSQNIGEQGY. The disordered stretch occupies residues 1135–1165; that stretch reads DRGNSQTFGNSQNIGEQGYSSTNSSDSSSQQ. Over residues 1154 to 1165 the composition is skewed to low complexity; it reads SSTNSSDSSSQQ. The DEP domain occupies 1187–1262; the sequence is PSTGVQLLSE…YGFYFYKIVT (76 aa). Phosphoserine; by PKB/AKT1 and PIM1 is present on Ser1530.

It belongs to the IML1 family. As to quaternary structure, within the GATOR complex, component of the GATOR1 subcomplex, made of DEPDC5, NPRL2 and NPRL3. GATOR1 mediates the strong interaction of the GATOR complex with small GTPases Rag (RagA/RRAGA, RagB/RRAGB, RagC/RRAGC and/or RagD/RRAGD) heterodimers. Interacts with SAMTOR; interaction is direct and takes place in presence of methionine, leading to inhibit the activity of the GATOR1 complex. Phosphorylation at Ser-1002 and Ser-1530 by AKT1 and PIM1 inhibit the activity of DEPDC5, releasing inhibition of the mTORC1 pathway. In terms of processing, ubiquitinated. Amino acid-induced 'Lys-48'-linked polyubiquitination of DEPDC5 by the BCR(KLHL22) ubiquitin ligase complex leads to DEPDC5 proteasomal degradation and inhibition of the GATOR1 complex. Ubiquitination may occur at multiple lysines. In terms of tissue distribution, expressed in developing and adult brain.

The protein resides in the lysosome membrane. It localises to the cytoplasm. It is found in the cytosol. The protein localises to the perinuclear region. As a component of the GATOR1 complex functions as an inhibitor of the amino acid-sensing branch of the mTORC1 pathway. In response to amino acid depletion, the GATOR1 complex has GTPase activating protein (GAP) activity and strongly increases GTP hydrolysis by RagA/RRAGA (or RagB/RRAGB) within heterodimeric Rag complexes, thereby turning them into their inactive GDP-bound form, releasing mTORC1 from lysosomal surface and inhibiting mTORC1 signaling. In the presence of abundant amino acids, the GATOR1 complex is negatively regulated by GATOR2, the other GATOR subcomplex, in this amino acid-sensing branch of the TORC1 pathway. Within the GATOR1 complex, DEPDC5 mediates direct interaction with the nucleotide-binding pocket of small GTPases Rag (RagA/RRAGA, RagB/RRAGB, RagC/RRAGC and/or RagD/RRAGD) and coordinates their nucleotide loading states by promoting RagA/RRAGA or RagB/RRAGB into their GDP-binding state and RagC/RRAGC or RagD/RRAGD into their GTP-binding state. However, it does not execute the GAP activity, which is mediated by NPRL2. This chain is GATOR1 complex protein DEPDC5, found in Homo sapiens (Human).